The sequence spans 405 residues: Glutamate-pyruvate aminotransferase AlaA (405 aa).

Positions 41 and 179 each coordinate L-alanine. K240 carries the N6-(pyridoxal phosphate)lysine modification. Position 378 (R378) interacts with L-alanine.

It belongs to the class-I pyridoxal-phosphate-dependent aminotransferase family. As to quaternary structure, homodimer. Pyridoxal 5'-phosphate is required as a cofactor.

It is found in the cytoplasm. The catalysed reaction is L-alanine + 2-oxoglutarate = pyruvate + L-glutamate. It participates in amino-acid biosynthesis; L-alanine biosynthesis. Involved in the biosynthesis of alanine. Catalyzes the transamination of pyruvate by glutamate, leading to the formation of L-alanine and 2-oxoglutarate. Is also able to catalyze the reverse reaction. The chain is Glutamate-pyruvate aminotransferase AlaA from Escherichia coli (strain K12).